Here is a 342-residue protein sequence, read N- to C-terminus: Ribosomal RNA small subunit methyltransferase C (342 aa).

This sequence belongs to the methyltransferase superfamily. RsmC family. As to quaternary structure, monomer.

The protein localises to the cytoplasm. It catalyses the reaction guanosine(1207) in 16S rRNA + S-adenosyl-L-methionine = N(2)-methylguanosine(1207) in 16S rRNA + S-adenosyl-L-homocysteine + H(+). In terms of biological role, specifically methylates the guanine in position 1207 of 16S rRNA in the 30S particle. This chain is Ribosomal RNA small subunit methyltransferase C, found in Salmonella typhi.